Consider the following 255-residue polypeptide: Small ribosomal subunit protein uS2 (255 aa).

Positions 233–255 are disordered; sequence DFVAEEAASEESLEELAEIVEGK.

This sequence belongs to the universal ribosomal protein uS2 family.

The polypeptide is Small ribosomal subunit protein uS2 (rpsB) (Lactococcus lactis subsp. lactis (strain IL1403) (Streptococcus lactis)).